Reading from the N-terminus, the 461-residue chain is Probable protein phosphatase 2C 40 (461 aa).

The interval 34-63 is disordered; it reads REASAERASASASAGAGGRERERRPSVAAG. One can recognise a PPM-type phosphatase domain in the interval 57–321; that stretch reads RPSVAAGQAC…DDTTCIVIDI (265 aa). Mn(2+)-binding residues include Asp-98, Gly-99, Asp-273, and Asp-312. The segment covering 439 to 453 has biased composition (basic and acidic residues); that stretch reads KKEAMEGKRHSRDSS. The interval 439-461 is disordered; that stretch reads KKEAMEGKRHSRDSSSRNSGSSE.

Belongs to the PP2C family. Mg(2+) is required as a cofactor. Mn(2+) serves as cofactor. In terms of tissue distribution, expressed in leaves, leaf sheaths, panicles, nodes and internodes. Expressed at low levels in roots and stems.

It localises to the nucleus. Its subcellular location is the cytoplasm. It carries out the reaction O-phospho-L-seryl-[protein] + H2O = L-seryl-[protein] + phosphate. The enzyme catalyses O-phospho-L-threonyl-[protein] + H2O = L-threonyl-[protein] + phosphate. Its function is as follows. Mediates the negative regulation of osmotic and salt stress tolerance through regulation of the jasmonate and abscisic acid signaling pathways and modulation of the raffinose family oligosaccharide metabolism pathway. The sequence is that of Probable protein phosphatase 2C 40 from Oryza sativa subsp. japonica (Rice).